Consider the following 446-residue polypeptide: Na(+)-translocating NADH-quinone reductase subunit A (446 aa).

Belongs to the NqrA family. As to quaternary structure, composed of six subunits; NqrA, NqrB, NqrC, NqrD, NqrE and NqrF.

The enzyme catalyses a ubiquinone + n Na(+)(in) + NADH + H(+) = a ubiquinol + n Na(+)(out) + NAD(+). In terms of biological role, NQR complex catalyzes the reduction of ubiquinone-1 to ubiquinol by two successive reactions, coupled with the transport of Na(+) ions from the cytoplasm to the periplasm. NqrA to NqrE are probably involved in the second step, the conversion of ubisemiquinone to ubiquinol. This Pasteurella multocida (strain Pm70) protein is Na(+)-translocating NADH-quinone reductase subunit A.